The chain runs to 142 residues: Metallothiol transferase FosB (142 aa).

The VOC domain maps to 5–120 (NVNHICFSVS…DGHKIELHTG (116 aa)). Mg(2+) contacts are provided by histidine 8, histidine 67, and glutamate 116. Glutamate 116 functions as the Proton donor/acceptor in the catalytic mechanism.

This sequence belongs to the fosfomycin resistance protein family. FosB subfamily. As to quaternary structure, homodimer. The cofactor is Mg(2+).

The protein resides in the cytoplasm. Metallothiol transferase which confers resistance to fosfomycin by catalyzing the addition of a thiol cofactor to fosfomycin. L-cysteine is probably the physiological thiol donor. In Staphylococcus epidermidis (strain ATCC 35984 / DSM 28319 / BCRC 17069 / CCUG 31568 / BM 3577 / RP62A), this protein is Metallothiol transferase FosB.